A 456-amino-acid chain; its full sequence is Bifunctional protein GlmU (456 aa).

Positions 1 to 229 are pyrophosphorylase; it reads MLNNAMSVVI…LSEVEGVNNR (229 aa). Residues 11–14, lysine 25, glutamine 76, 81–82, 103–105, glycine 140, glutamate 154, asparagine 169, and asparagine 227 each bind UDP-N-acetyl-alpha-D-glucosamine; these read LAAG, GT, and YGD. Residue aspartate 105 participates in Mg(2+) binding. Residue asparagine 227 participates in Mg(2+) binding. The segment at 230 to 250 is linker; the sequence is LQLSRLERVYQSEQAEKLLLA. Residues 251–456 are N-acetyltransferase; the sequence is GVMLRDPARF…EGWRRPVKKK (206 aa). 2 residues coordinate UDP-N-acetyl-alpha-D-glucosamine: arginine 333 and lysine 351. Histidine 363 (proton acceptor) is an active-site residue. Positions 366 and 377 each coordinate UDP-N-acetyl-alpha-D-glucosamine. Acetyl-CoA-binding positions include alanine 380, 386–387, serine 405, alanine 423, and arginine 440; that span reads NY.

In the N-terminal section; belongs to the N-acetylglucosamine-1-phosphate uridyltransferase family. This sequence in the C-terminal section; belongs to the transferase hexapeptide repeat family. In terms of assembly, homotrimer. Mg(2+) serves as cofactor.

It localises to the cytoplasm. The catalysed reaction is alpha-D-glucosamine 1-phosphate + acetyl-CoA = N-acetyl-alpha-D-glucosamine 1-phosphate + CoA + H(+). It carries out the reaction N-acetyl-alpha-D-glucosamine 1-phosphate + UTP + H(+) = UDP-N-acetyl-alpha-D-glucosamine + diphosphate. It functions in the pathway nucleotide-sugar biosynthesis; UDP-N-acetyl-alpha-D-glucosamine biosynthesis; N-acetyl-alpha-D-glucosamine 1-phosphate from alpha-D-glucosamine 6-phosphate (route II): step 2/2. Its pathway is nucleotide-sugar biosynthesis; UDP-N-acetyl-alpha-D-glucosamine biosynthesis; UDP-N-acetyl-alpha-D-glucosamine from N-acetyl-alpha-D-glucosamine 1-phosphate: step 1/1. The protein operates within bacterial outer membrane biogenesis; LPS lipid A biosynthesis. Functionally, catalyzes the last two sequential reactions in the de novo biosynthetic pathway for UDP-N-acetylglucosamine (UDP-GlcNAc). The C-terminal domain catalyzes the transfer of acetyl group from acetyl coenzyme A to glucosamine-1-phosphate (GlcN-1-P) to produce N-acetylglucosamine-1-phosphate (GlcNAc-1-P), which is converted into UDP-GlcNAc by the transfer of uridine 5-monophosphate (from uridine 5-triphosphate), a reaction catalyzed by the N-terminal domain. This Escherichia fergusonii (strain ATCC 35469 / DSM 13698 / CCUG 18766 / IAM 14443 / JCM 21226 / LMG 7866 / NBRC 102419 / NCTC 12128 / CDC 0568-73) protein is Bifunctional protein GlmU.